A 394-amino-acid chain; its full sequence is MKSKILMKYRSLLVRIYSIVFRIIGLLPRNEKLIIFESYSGKQFSCNPRAIFEYLEENKDKYDYQLIWSIDKRNKDLFDNSDVNYLRRFSLKWLWYMATAKYWVTNSRLPLWIPKPRNTTYVQTWHGTPLKKLANDMDEVHMPGTTTEQYKRNFLKEASKWDYLISPNAYSTEIFRSAFQFKKTFIESGYPRNDFLHKKNRNEEMLKIKERLGINKDKKIILYAPTWRDNSFYAKGKYKFNMVLDLESLKNQLCNEYILILRMHYLVSENINLTEYKEFAYDFSDHNDIRELYLISDILITDYSSVFFDFAGLKRPILFYVPDIEFYRDNLRGFYYDFEKCAPGPLLKTTEKVIEAIHKTKNYKQDENITSFYDQFCYLEKGDSSKKVVEELLG.

Belongs to the CDP-glycerol glycerophosphotransferase family.

It localises to the cell membrane. The catalysed reaction is 4-O-[(2R)-glycerylphospho]-N-acetyl-beta-D-mannosaminyl-(1-&gt;4)-N-acetyl-alpha-D-glucosaminyl di-trans,octa-cis-undecaprenyl diphosphate + n CDP-glycerol = 4-O-{[(2R)-1-glycerylphospho](n)-(2R)-1-glycerylphospho}-N-acetyl-beta-D-mannosaminyl-(1-&gt;4)-N-acetyl-alpha-D-glucosaminyl undecaprenyl diphosphate + n CMP + n H(+). Catalyzes the addition of further 2-8 glycerol phosphate units from CDP-glycerol to the single glycerol phosphate unit bound to the prenolpyrophosphate-linked disaccharide. The function in the cell is unknown since the product is not part of the poly(ribitol phosphate) teichoic acid found in the cell walls. In Bacillus spizizenii (strain ATCC 23059 / NRRL B-14472 / W23) (Bacillus subtilis subsp. spizizenii), this protein is Teichoic acid poly(glycerol phosphate) polymerase (tarF).